The primary structure comprises 134 residues: Phosphoribosyl-AMP cyclohydrolase (134 aa).

Asp80 is a Mg(2+) binding site. Position 81 (Cys81) interacts with Zn(2+). 2 residues coordinate Mg(2+): Asp82 and Asp84. The Zn(2+) site is built by Cys98 and Cys105.

The protein belongs to the PRA-CH family. In terms of assembly, homodimer. It depends on Mg(2+) as a cofactor. Zn(2+) is required as a cofactor.

The protein localises to the cytoplasm. The catalysed reaction is 1-(5-phospho-beta-D-ribosyl)-5'-AMP + H2O = 1-(5-phospho-beta-D-ribosyl)-5-[(5-phospho-beta-D-ribosylamino)methylideneamino]imidazole-4-carboxamide. Its pathway is amino-acid biosynthesis; L-histidine biosynthesis; L-histidine from 5-phospho-alpha-D-ribose 1-diphosphate: step 3/9. In terms of biological role, catalyzes the hydrolysis of the adenine ring of phosphoribosyl-AMP. The sequence is that of Phosphoribosyl-AMP cyclohydrolase from Bordetella petrii (strain ATCC BAA-461 / DSM 12804 / CCUG 43448).